We begin with the raw amino-acid sequence, 506 residues long: Ribose import ATP-binding protein RbsA (506 aa).

ABC transporter domains follow at residues 5 to 237 (VQLI…VGRP) and 249 to 492 (PFGA…LAIE). ATP is bound at residue 37–44 (GENGAGKS).

Belongs to the ABC transporter superfamily. Ribose importer (TC 3.A.1.2.1) family. As to quaternary structure, the complex is composed of an ATP-binding protein (RbsA), two transmembrane proteins (RbsC) and a solute-binding protein (RbsB).

It is found in the cell inner membrane. The enzyme catalyses D-ribose(out) + ATP + H2O = D-ribose(in) + ADP + phosphate + H(+). Part of the ABC transporter complex RbsABC involved in ribose import. Responsible for energy coupling to the transport system. The protein is Ribose import ATP-binding protein RbsA of Chelativorans sp. (strain BNC1).